The primary structure comprises 306 residues: Pantothenate kinase (306 aa).

91–98 (GSVAVGKS) contributes to the ATP binding site.

Belongs to the prokaryotic pantothenate kinase family.

It localises to the cytoplasm. The enzyme catalyses (R)-pantothenate + ATP = (R)-4'-phosphopantothenate + ADP + H(+). It participates in cofactor biosynthesis; coenzyme A biosynthesis; CoA from (R)-pantothenate: step 1/5. The sequence is that of Pantothenate kinase from Streptococcus suis (strain 98HAH33).